The following is a 227-amino-acid chain: Ashwin (227 aa).

The segment covering 71-84 has biased composition (basic and acidic residues); it reads LPRSRWGKRMEKSR. The segment at 71–227 is disordered; the sequence is LPRSRWGKRM…KKKIQHITWP (157 aa). A compositionally biased stretch (low complexity) spans 88–98; sequence SSSSTHSSSTD. Residues 153–173 show a composition bias toward polar residues; that stretch reads GASTNCSSSNFSNRTPVSSSG. Residues 178–191 show a composition bias toward low complexity; the sequence is SPSNHSNSSVHSNN. Over residues 204-219 the composition is skewed to basic and acidic residues; sequence GEPDTAKDIKSPETKK.

This sequence belongs to the ashwin family.

It is found in the nucleus. The sequence is that of Ashwin from Danio rerio (Zebrafish).